Here is a 145-residue protein sequence, read N- to C-terminus: uncharacterized protein (145 aa).

Residues 1–22 form the signal peptide; it reads MLTRLVLSAHLSSTTSPPWTHA. Asparagine 98 is a glycosylation site (N-linked (GlcNAc...) asparagine). A disordered region spans residues 103–145; sequence SSGQQRQAARQEEENSICKAHDSREGRLGYPLSAHQPGSGGPN.

It localises to the secreted. This is an uncharacterized protein from Homo sapiens (Human).